Here is a 155-residue protein sequence, read N- to C-terminus: Ribosomal RNA large subunit methyltransferase H (155 aa).

Residues Leu-72, Gly-103, and 122 to 127 (LSDLTL) contribute to the S-adenosyl-L-methionine site.

The protein belongs to the RNA methyltransferase RlmH family. In terms of assembly, homodimer.

It is found in the cytoplasm. It carries out the reaction pseudouridine(1915) in 23S rRNA + S-adenosyl-L-methionine = N(3)-methylpseudouridine(1915) in 23S rRNA + S-adenosyl-L-homocysteine + H(+). Its function is as follows. Specifically methylates the pseudouridine at position 1915 (m3Psi1915) in 23S rRNA. The protein is Ribosomal RNA large subunit methyltransferase H of Paracidovorax citrulli (strain AAC00-1) (Acidovorax citrulli).